The chain runs to 157 residues: 2-C-methyl-D-erythritol 2,4-cyclodiphosphate synthase (157 aa).

The a divalent metal cation site is built by Asp-8 and His-10. 4-CDP-2-C-methyl-D-erythritol 2-phosphate-binding positions include 8–10 and 34–35; these read DVH and HS. His-42 contacts a divalent metal cation. Residues 56-58, 61-65, 100-106, 132-135, Phe-139, and Arg-142 each bind 4-CDP-2-C-methyl-D-erythritol 2-phosphate; these read DIG, FPDTD, AQAPKMA, and TTTE.

This sequence belongs to the IspF family. Homotrimer. The cofactor is a divalent metal cation.

The catalysed reaction is 4-CDP-2-C-methyl-D-erythritol 2-phosphate = 2-C-methyl-D-erythritol 2,4-cyclic diphosphate + CMP. The protein operates within isoprenoid biosynthesis; isopentenyl diphosphate biosynthesis via DXP pathway; isopentenyl diphosphate from 1-deoxy-D-xylulose 5-phosphate: step 4/6. Its function is as follows. Involved in the biosynthesis of isopentenyl diphosphate (IPP) and dimethylallyl diphosphate (DMAPP), two major building blocks of isoprenoid compounds. Catalyzes the conversion of 4-diphosphocytidyl-2-C-methyl-D-erythritol 2-phosphate (CDP-ME2P) to 2-C-methyl-D-erythritol 2,4-cyclodiphosphate (ME-CPP) with a corresponding release of cytidine 5-monophosphate (CMP). This is 2-C-methyl-D-erythritol 2,4-cyclodiphosphate synthase from Serratia proteamaculans (strain 568).